Here is a 290-residue protein sequence, read N- to C-terminus: Pyridoxal kinase PdxY (290 aa).

Substrate contacts are provided by residues Ser12 and 47-48 (TQ). Residues Asp114, Glu151, Lys184, and 211–214 (RPLL) contribute to the ATP site. Residue Asp225 participates in substrate binding.

This sequence belongs to the pyridoxine kinase family. PdxY subfamily. In terms of assembly, homodimer. Requires Mg(2+) as cofactor.

The catalysed reaction is pyridoxal + ATP = pyridoxal 5'-phosphate + ADP + H(+). Its pathway is cofactor metabolism; pyridoxal 5'-phosphate salvage; pyridoxal 5'-phosphate from pyridoxal: step 1/1. In terms of biological role, pyridoxal kinase involved in the salvage pathway of pyridoxal 5'-phosphate (PLP). Catalyzes the phosphorylation of pyridoxal to PLP. This chain is Pyridoxal kinase PdxY, found in Pseudomonas entomophila (strain L48).